The sequence spans 335 residues: Autophagy-related protein 21 (335 aa).

WD repeat units follow at residues 165 to 205 (CHSS…LVTE) and 210 to 249 (YIPASIVSISFHPVEPFLACASENGTIHVFKISKQPSDPN).

The protein belongs to the WD repeat PROPPIN family.

It localises to the cytoplasm. Its subcellular location is the golgi apparatus. The protein localises to the golgi stack membrane. It is found in the vacuole membrane. The protein resides in the preautophagosomal structure membrane. Its function is as follows. Required for cytoplasm to vacuole transport (Cvt) vesicles formation and autophagy. Has a role in sporulation. This chain is Autophagy-related protein 21 (mug179), found in Schizosaccharomyces pombe (strain 972 / ATCC 24843) (Fission yeast).